We begin with the raw amino-acid sequence, 175 residues long: NADH-ubiquinone oxidoreductase chain 6 (175 aa).

Helical transmembrane passes span 1-21 (MMLY…VGFS), 25-45 (SPIY…GIVL), 47-67 (FGGS…MMVV), 88-108 (AVLG…YYVL), and 149-169 (YGTW…VVIM).

The protein belongs to the complex I subunit 6 family. In terms of assembly, core subunit of respiratory chain NADH dehydrogenase (Complex I) which is composed of 45 different subunits.

The protein localises to the mitochondrion inner membrane. It catalyses the reaction a ubiquinone + NADH + 5 H(+)(in) = a ubiquinol + NAD(+) + 4 H(+)(out). In terms of biological role, core subunit of the mitochondrial membrane respiratory chain NADH dehydrogenase (Complex I) which catalyzes electron transfer from NADH through the respiratory chain, using ubiquinone as an electron acceptor. Essential for the catalytic activity and assembly of complex I. The polypeptide is NADH-ubiquinone oxidoreductase chain 6 (MT-ND6) (Bos indicus (Zebu)).